The chain runs to 391 residues: Phosphoglycerate kinase (391 aa).

Residues Asp-21–Asn-23, Arg-36, His-59–Arg-62, Arg-113, and Arg-146 contribute to the substrate site. ATP-binding positions include Lys-197, Glu-319, and Gly-345–Thr-348.

It belongs to the phosphoglycerate kinase family. Monomer.

Its subcellular location is the cytoplasm. It catalyses the reaction (2R)-3-phosphoglycerate + ATP = (2R)-3-phospho-glyceroyl phosphate + ADP. The protein operates within carbohydrate degradation; glycolysis; pyruvate from D-glyceraldehyde 3-phosphate: step 2/5. This chain is Phosphoglycerate kinase, found in Xylella fastidiosa (strain Temecula1 / ATCC 700964).